Reading from the N-terminus, the 513-residue chain is Sulfhydryl oxidase 1 (513 aa).

The first 30 residues, 1–30 (MAAAAVARRVVLVLVLAAASLAAAPRGAAA), serve as a signal peptide directing secretion. Residues 31-174 (RSLGGREGPG…LLKWINNQMK (144 aa)) form the Thioredoxin domain. Asn-51 carries N-linked (GlcNAc...) asparagine glycosylation. Active-site nucleophile residues include Cys-76 and Cys-79. Cys-76 and Cys-79 are joined by a disulfide. N-linked (GlcNAc...) asparagine glycans are attached at residues Asn-193 and Asn-266. Cys-301 and Cys-313 are oxidised to a cystine. One can recognise an ERV/ALR sulfhydryl oxidase domain in the interval 304–406 (SKSETRGFSC…GDPLFPKVTW (103 aa)). Residues Arg-309, Trp-316, His-320, Glu-350, His-354, 377-384 (WSTHNKVN), Lys-403, and Trp-406 contribute to the FAD site. A disulfide bridge connects residues Cys-348 and Cys-351. Residues Cys-412 and Cys-415 are joined by a disulfide bond.

FAD is required as a cofactor.

It is found in the secreted. It carries out the reaction 2 R'C(R)SH + O2 = R'C(R)S-S(R)CR' + H2O2. In terms of biological role, catalyzes the oxidation of sulfhydryl groups in peptide and protein thiols to disulfides with the reduction of oxygen to hydrogen peroxide. May contribute to disulfide bond formation in a variety of secreted proteins. The sequence is that of Sulfhydryl oxidase 1 (QSOX1) from Oryza sativa subsp. japonica (Rice).